The primary structure comprises 539 residues: GMP synthase [glutamine-hydrolyzing] (539 aa).

The 199-residue stretch at 4 to 202 folds into the Glutamine amidotransferase type-1 domain; sequence KILILDFGSQ…VLDIAGAKPD (199 aa). Cys81 acts as the Nucleophile in catalysis. Active-site residues include His176 and Glu178. Residues 203–395 enclose the GMPS ATP-PPase domain; the sequence is WIMRDHIEEA…LGLPAEMVYR (193 aa). ATP is bound at residue 230–236; the sequence is SGGVDSS.

Homodimer.

It carries out the reaction XMP + L-glutamine + ATP + H2O = GMP + L-glutamate + AMP + diphosphate + 2 H(+). It functions in the pathway purine metabolism; GMP biosynthesis; GMP from XMP (L-Gln route): step 1/1. Functionally, catalyzes the synthesis of GMP from XMP. The polypeptide is GMP synthase [glutamine-hydrolyzing] (Burkholderia pseudomallei (strain 1106a)).